A 1240-amino-acid chain; its full sequence is DNA polymerase catalytic subunit (1240 aa).

Residues 1 to 26 (MFCAAGGPASPGGKSAARAASGFFAP) are compositionally biased toward low complexity. Disordered regions lie at residues 1–65 (MFCA…PAQR), 646–695 (GLDK…RETG), and 1103–1139 (AAAPGDEPAPPAALPSPAKRPRETPSHADPPGGASKP). Polar residues predominate over residues 44-56 (NFYNPHLAQTGTQ). Positions 669–688 (NGDEDKDDDEDGDEDGDERE) are enriched in acidic residues.

The protein belongs to the DNA polymerase type-B family. Forms a complex with the ssDNA-binding protein UL29, the DNA polymerase processivity factor, and the alkaline exonuclease. Interacts with the putative helicase-primase complex subunit UL8; this interaction may coordinate leading and lagging strand DNA synthesis at the replication fork.

It is found in the host nucleus. It catalyses the reaction DNA(n) + a 2'-deoxyribonucleoside 5'-triphosphate = DNA(n+1) + diphosphate. It carries out the reaction Endonucleolytic cleavage to 5'-phosphomonoester.. Its function is as follows. Replicates viral genomic DNA. The replication complex is composed of six viral proteins: the DNA polymerase, processivity factor, primase, primase-associated factor, helicase, and ssDNA-binding protein. Additionally, the polymerase contains an intrinsic ribonuclease H (RNase H) activity that specifically degrades RNA/DNA heteroduplexes or duplex DNA substrates in the 5' to 3' direction. Therefore, it can catalyze the excision of the RNA primers that initiate the synthesis of Okazaki fragments at a replication fork during viral DNA replication. The polypeptide is DNA polymerase catalytic subunit (Human herpesvirus 2 (strain 186) (HHV-2)).